Reading from the N-terminus, the 174-residue chain is uncharacterized protein (174 aa).

Residues 126–146 traverse the membrane as a helical segment; it reads AIDEFIITVIPVVLGSGIPLF.

It to B.subtilis YyaP.

Its subcellular location is the membrane. This is an uncharacterized protein from Bacillus subtilis (strain 168).